Here is a 799-residue protein sequence, read N- to C-terminus: DNA ligase (799 aa).

The segment covering 1–11 has biased composition (basic and acidic residues); the sequence is MTEVKTGRVVD. Residues 1–35 are disordered; that stretch reads MTEVKTGRVVDDAPVNDAPENNAAEATSPARHDAI. NAD(+)-binding positions include 67–71, 116–117, and D147; these read DAEYD and SL. K149 functions as the N6-AMP-lysine intermediate in the catalytic mechanism. NAD(+) contacts are provided by R170, E207, K327, and K351. Residues C445, C448, C463, and C468 each coordinate Zn(2+). A BRCT domain is found at 634–723; it reads AIVLPLQGLK…VASVDASEAV (90 aa). The interval 720–799 is disordered; it reads SEAVAEETPP…RGRAEQLKLF (80 aa). The span at 755-767 shows a compositional bias: low complexity; the sequence is GSASGDDSRGAAA. A compositionally biased stretch (basic and acidic residues) spans 787–799; it reads DVPRGRAEQLKLF.

The protein belongs to the NAD-dependent DNA ligase family. LigA subfamily. Requires Mg(2+) as cofactor. Mn(2+) is required as a cofactor.

It carries out the reaction NAD(+) + (deoxyribonucleotide)n-3'-hydroxyl + 5'-phospho-(deoxyribonucleotide)m = (deoxyribonucleotide)n+m + AMP + beta-nicotinamide D-nucleotide.. In terms of biological role, DNA ligase that catalyzes the formation of phosphodiester linkages between 5'-phosphoryl and 3'-hydroxyl groups in double-stranded DNA using NAD as a coenzyme and as the energy source for the reaction. It is essential for DNA replication and repair of damaged DNA. This Nitratidesulfovibrio vulgaris (strain ATCC 29579 / DSM 644 / CCUG 34227 / NCIMB 8303 / VKM B-1760 / Hildenborough) (Desulfovibrio vulgaris) protein is DNA ligase.